A 977-amino-acid chain; its full sequence is Alanine--tRNA ligase (977 aa).

The disordered stretch occupies residues 512 to 535 (SQVDSKLQSSTPAGTGSYDSKQVS). Histidine 618, histidine 622, cysteine 720, and histidine 724 together coordinate Zn(2+).

It belongs to the class-II aminoacyl-tRNA synthetase family. Zn(2+) serves as cofactor.

The protein resides in the cytoplasm. It carries out the reaction tRNA(Ala) + L-alanine + ATP = L-alanyl-tRNA(Ala) + AMP + diphosphate. Catalyzes the attachment of alanine to tRNA(Ala) in a two-step reaction: alanine is first activated by ATP to form Ala-AMP and then transferred to the acceptor end of tRNA(Ala). Also edits incorrectly charged Ser-tRNA(Ala) and Gly-tRNA(Ala) via its editing domain. In Leptospira interrogans serogroup Icterohaemorrhagiae serovar copenhageni (strain Fiocruz L1-130), this protein is Alanine--tRNA ligase.